The chain runs to 264 residues: uncharacterized protein (264 aa).

A divalent metal cation-binding residues include H7, H9, E102, H138, H163, and D213.

Belongs to the metallo-dependent hydrolases superfamily. TatD-type hydrolase family. A divalent metal cation serves as cofactor.

This is an uncharacterized protein from Buchnera aphidicola subsp. Acyrthosiphon pisum (strain APS) (Acyrthosiphon pisum symbiotic bacterium).